Here is a 298-residue protein sequence, read N- to C-terminus: Tyrosine recombinase XerC (298 aa).

The 84-residue stretch at 1-84 (MNHIQEAFLN…TLRTFYEYWM (84 aa)) folds into the Core-binding (CB) domain. The Tyr recombinase domain occupies 105 to 286 (YLPQFFYEEE…SNQQLRKVYL (182 aa)). Residues Arg145, Lys169, His238, Arg241, and His264 contribute to the active site. Residue Tyr273 is the O-(3'-phospho-DNA)-tyrosine intermediate of the active site.

The protein belongs to the 'phage' integrase family. XerC subfamily. Forms a cyclic heterotetrameric complex composed of two molecules of XerC and two molecules of XerD.

It is found in the cytoplasm. In terms of biological role, site-specific tyrosine recombinase, which acts by catalyzing the cutting and rejoining of the recombining DNA molecules. The XerC-XerD complex is essential to convert dimers of the bacterial chromosome into monomers to permit their segregation at cell division. It also contributes to the segregational stability of plasmids. This Staphylococcus aureus (strain MRSA252) protein is Tyrosine recombinase XerC.